Here is a 228-residue protein sequence, read N- to C-terminus: Woronin body membrane protein wscA (228 aa).

The next 4 helical transmembrane spans lie at 89-109, 130-150, 162-182, and 185-205; these read MTLYGMFISAPLGHLLVGILQ, LIVSPIQNAVYLMSMAIIAGA, AGFMPVMKVSWITSPLALAFA, and FLPEHTWVPFFNIIGFFIGTY.

The protein belongs to the peroxisomal membrane protein PXMP2/4 family. In terms of assembly, self-assembles into detergent-resistant oligomers and forms a complex with hexA assemblies.

The protein localises to the peroxisome membrane. It is found in the cell septum. Woronin sorting complex protein involved in both Woronin bodies (WB) formation and inherence. Localizes to large peroxisome membranes where it self-assembles into detergent-resistant oligomers that envelop hex-1 assemblies, producing asymmetrical nascent WBs. These structures are then delivered to the cell cortex, which permits partitioning of the nascent WB and WB inheritance. The chain is Woronin body membrane protein wscA from Aspergillus fumigatus (strain ATCC MYA-4609 / CBS 101355 / FGSC A1100 / Af293) (Neosartorya fumigata).